The sequence spans 224 residues: Probable Brix domain-containing ribosomal biogenesis protein (224 aa).

The Brix domain maps to 1–196; it reads MMLITTSHRP…IWIMEDGRRW (196 aa).

Probably involved in the biogenesis of the ribosome. The polypeptide is Probable Brix domain-containing ribosomal biogenesis protein (Pyrococcus horikoshii (strain ATCC 700860 / DSM 12428 / JCM 9974 / NBRC 100139 / OT-3)).